Consider the following 326-residue polypeptide: MSQLTDGFGRSFPYLRLSLTEACNFRCSYCLPDGYQVDGRPRFLQVDEIARLVRAFAALGMSKIRLTGGEPSLRKDLDEIIATVAAAPGIRKVAITTNGTLLPRRLPGWHRAGLTALNVSMDSLQRERFRTITGHDRLPEIEQGLALAQALGLPAIKLNAVLLRGLNDDELPQWMDYLRDRPFSVRFIELMRTGDNEAYFQRHHLRADVVIEQLLAAGWHERPRAADAGPAREFGHPDHRGSIGIIAPYSRDFCKGCNRLRVTAKGDLRLCLFGEFGVPLRPLLQRDDDHDALLARITTQLGLKAAGHGLHQGQTGLTPHLASIGG.

Positions 7 to 232 (GFGRSFPYLR…PRAADAGPAR (226 aa)) constitute a Radical SAM core domain. Arginine 16 serves as a coordination point for GTP. Residues cysteine 23 and cysteine 27 each coordinate [4Fe-4S] cluster. Tyrosine 29 contacts S-adenosyl-L-methionine. Cysteine 30 contributes to the [4Fe-4S] cluster binding site. Arginine 65 is a binding site for GTP. Glycine 69 contributes to the S-adenosyl-L-methionine binding site. Threonine 96 is a binding site for GTP. Residue serine 120 participates in S-adenosyl-L-methionine binding. Lysine 157 serves as a coordination point for GTP. Position 191 (methionine 191) interacts with S-adenosyl-L-methionine. Cysteine 254 and cysteine 257 together coordinate [4Fe-4S] cluster. GTP is bound at residue 259–261 (RLR). Cysteine 271 contributes to the [4Fe-4S] cluster binding site.

It belongs to the radical SAM superfamily. MoaA family. In terms of assembly, monomer and homodimer. [4Fe-4S] cluster is required as a cofactor.

The enzyme catalyses GTP + AH2 + S-adenosyl-L-methionine = (8S)-3',8-cyclo-7,8-dihydroguanosine 5'-triphosphate + 5'-deoxyadenosine + L-methionine + A + H(+). Its pathway is cofactor biosynthesis; molybdopterin biosynthesis. Its function is as follows. Catalyzes the cyclization of GTP to (8S)-3',8-cyclo-7,8-dihydroguanosine 5'-triphosphate. The protein is GTP 3',8-cyclase of Stenotrophomonas maltophilia (strain R551-3).